The primary structure comprises 28 residues: Ornatin-D (28 aa).

It belongs to the ornatin family.

The protein resides in the secreted. In terms of biological role, potent inhibitor of fibrinogen interaction with platelet receptors expressed on glycoprotein IIb-IIIa complex. May prevent blood from clotting during either feeding and/or storage of ingested blood. The sequence is that of Ornatin-D from Placobdella ornata (Turtle leech).